The chain runs to 334 residues: Probable 2-ketogluconate reductase (334 aa).

NAD(+) contacts are provided by residues 164 to 165 (RI), 244 to 246 (AGR), and D270. Residue R246 is part of the active site. The active site involves E275. H294 serves as the catalytic Proton donor. Position 294 to 297 (294 to 297 (HIGT)) interacts with NAD(+).

This sequence belongs to the D-isomer specific 2-hydroxyacid dehydrogenase family.

The protein resides in the cytoplasm. The enzyme catalyses D-gluconate + NADP(+) = 2-dehydro-D-gluconate + NADPH + H(+). Functionally, catalyzes the NADPH-dependent reduction of 2,5-diketo-D-gluconate (25DKG) to 5-keto-D-gluconate (5KDG), 2-keto-D-gluconate (2KDG) to D-gluconate, and 2-keto-L-gulonate (2KLG) to L-idonate (IA). The polypeptide is Probable 2-ketogluconate reductase (tkrA) (Dictyostelium discoideum (Social amoeba)).